The sequence spans 133 residues: Small ribosomal subunit protein uS8 (133 aa).

The protein belongs to the universal ribosomal protein uS8 family. Part of the 30S ribosomal subunit.

Functionally, one of the primary rRNA binding proteins, it binds directly to 16S rRNA central domain where it helps coordinate assembly of the platform of the 30S subunit. In Staphylothermus marinus (strain ATCC 43588 / DSM 3639 / JCM 9404 / F1), this protein is Small ribosomal subunit protein uS8.